The following is a 978-amino-acid chain: MVFCTYCGQSFTRDEHLERHILTHTNVKPFKCFTCHMSFARRDLLQRHYTVHGRDQNQNEIPAVNGMIPKSAGRTPIACSNCAKTKTKCDKKFPCSRCAGRNLRCTLRPTRRASKNANRVGATLESATDVPTEVTTVNVEATSKDTRAQENSSSPSSQKSGTPISIGPIMEETPDIAPPQPFTEQVNGGPTPPEFSPDLQESFMDHNLMSGFPGLTNPSKDSSDDGSSPRFLLDWSQMQMPLGYDNMIQSDLMLDPELSFDPNSVPLAPHADGILSIMPELANGGMESLITPFETPKMSRSFVELGLGNSNPAFHSHRHQSMPSVQSIPNSGNEMPAMIAAQDGWSAFRCTPTLPSSSCPKTAKLNLEQLEETLRNHEGWVSWSPRWEDNDLAGGGDHLTVMQLHESTRDKLLAIMQSFLHKALETHREGRGTSNGSHSPNPSGASNFVLLPPGRVLEYFLRSYSNSFERYFPLTSRSTLDANELMHCYNDRAASILVLLMIAQGAANIPSPEARMLTGGLTEACRISLFDLIERNIIMSGDPIVLHSALLFTVQAAWSGDKWQMDIAMGQRGMYFAMLRHSGVLDRSSHAASAQPQRTLEQLWTDWIQNESRSRLIYSWVMVDQDLALFHDTAPLFSVTEFGAPMPDADRLWHAKSAEQWSSTFERVHEFSSGFSSVGSGARPLSLRDLFRHFLDDDLIPMGIEMTPLQLRLLLHPLQSMVCQFSQLLSCFAPATYRTSISVHPNQAQPSSRNISQSSTRTRLAEVQALLQRWFDLAERYLKANPLCALMQTNLILFHLISLNAVTNFPEIERLARRENVDGTYHQLLWLHKRCIPDVEEAVFHCGQIFRLVRSMPRGVRPPWWAGAIYRVALILWTDSLTHKDALTSTSPQGNGMFPSPIAGPSFAIDALPPDHALIVRYLTKREGVPCVTKLDGSQMGLERAYPVLRHCVEVIDEGCSTRFSDAIRGKLERLSRG.

2 consecutive C2H2-type zinc fingers follow at residues 2 to 24 (VFCT…ILTH) and 30 to 52 (FKCF…YTVH). A DNA-binding region (zn(2)-C6 fungal-type) is located at residues 79–105 (CSNCAKTKTKCDKKFPCSRCAGRNLRC). 2 disordered regions span residues 113–231 (ASKN…SPRF) and 426–445 (THRE…PSGA). Positions 152-165 (SSSPSSQKSGTPIS) are enriched in low complexity. Residues 432-445 (GTSNGSHSPNPSGA) are compositionally biased toward polar residues.

It localises to the nucleus. In terms of biological role, transcription factor; part of the gene cluster 29 that mediates the biosynthesis of dihydroxynaphthalene (DHN)-melanin, a bluish-green pigment forming a dark layer in the conidial wall that protects the conidia from UV radiations. The sequence is that of Transcription factor MYCGRDRAFT_87993 from Zymoseptoria tritici (strain CBS 115943 / IPO323) (Speckled leaf blotch fungus).